The sequence spans 303 residues: Trans-enoyl reductase tazE (303 aa).

The disordered stretch occupies residues 1-26; it reads MTAEHDAAILPKPGGPLAVGKRATPE. Residue 44-49 coordinates NADP(+); it reads CDYYQR. Substrate is bound at residue 136-143; it reads LAVLTALT. NADP(+) contacts are provided by residues 170–173, 193–196, tyrosine 211, and 246–247; these read SSSV, SPKH, and LD. 265 to 269 provides a ligand contact to substrate; that stretch reads VLPEC.

The protein belongs to the zinc-containing alcohol dehydrogenase family.

It participates in secondary metabolite biosynthesis. Functionally, trans-enoyl reductase; part of the gene cluster that mediates the biosynthesis of azaterrilone A and other azaphilones, a class of fungal metabolites characterized by a highly oxygenated pyrano-quinone bicyclic core and exhibiting a broad range of bioactivities. The first step of the pathway begins with the non-reducing polyketide synthase tazA that assembles one acetyl-CoA starter unit, five malonyl-CoA units, and catalyzes a series of Claisen condensations, methylation, PT-mediated cyclization, and finally releases the first hexaketide precursor through the R-domain. The tazA product then undergoes reduction on its terminal ketone and the following pyran-ring formation by yet undetermined enzyme(s). Dehydration and enoyl reduction, possibly involving the trans-enoyl reductase tazE leads to the next intermediate. TazD is predicted as an acetyltransferase and might catalyze the acetylation steps leading to the synthesis of azaterrilone A. Azaterrilone A is not the final product of the taz pathway and both the highly reducing polyketide synthase tazB and the dual enzyme tazHJ catalyze late steps of the pathway, leading to the production of the 2 final stereoisomers that contain additional polyketide modification whose structures have still to be determined. The sequence is that of Trans-enoyl reductase tazE from Aspergillus terreus (strain NIH 2624 / FGSC A1156).